The sequence spans 184 residues: Deoxyuridine 5'-triphosphate nucleotidohydrolase (184 aa).

Positions 1 to 16 are enriched in polar residues; the sequence is MPHTQTDAHQNNQENF. Residues 1 to 25 form a disordered region; that stretch reads MPHTQTDAHQNNQENFSSSLISSRP. Residues 96–98, N109, 113–115, and K123 contribute to the substrate site; these read RSG and TID. Residues 165–184 form a disordered region; it reads STKNTVGNRGAGGFGSTGHD. A compositionally biased stretch (gly residues) spans 173 to 184; the sequence is RGAGGFGSTGHD.

It belongs to the dUTPase family. The cofactor is Mg(2+).

It catalyses the reaction dUTP + H2O = dUMP + diphosphate + H(+). Its pathway is pyrimidine metabolism; dUMP biosynthesis; dUMP from dCTP (dUTP route): step 2/2. In terms of biological role, this enzyme is involved in nucleotide metabolism: it produces dUMP, the immediate precursor of thymidine nucleotides and it decreases the intracellular concentration of dUTP so that uracil cannot be incorporated into DNA. This chain is Deoxyuridine 5'-triphosphate nucleotidohydrolase, found in Bartonella henselae (strain ATCC 49882 / DSM 28221 / CCUG 30454 / Houston 1) (Rochalimaea henselae).